We begin with the raw amino-acid sequence, 119 residues long: Protein TusC (119 aa).

This sequence belongs to the DsrF/TusC family. As to quaternary structure, heterohexamer, formed by a dimer of trimers. The hexameric TusBCD complex contains 2 copies each of TusB, TusC and TusD. The TusBCD complex interacts with TusE.

Its subcellular location is the cytoplasm. Functionally, part of a sulfur-relay system required for 2-thiolation of 5-methylaminomethyl-2-thiouridine (mnm(5)s(2)U) at tRNA wobble positions. This Klebsiella pneumoniae subsp. pneumoniae (strain ATCC 700721 / MGH 78578) protein is Protein TusC.